Reading from the N-terminus, the 662-residue chain is Hypoxia-inducible factor 3-alpha (662 aa).

The disordered stretch occupies residues 1-25; the sequence is MDWDQDRSNTELRKEKSRDAARSRR. The bHLH domain maps to 12-65; it reads LRKEKSRDAARSRRSQETEVLYQLAHTLPFARGVSAHLDKASIMRLTISYLRMH. The interval 75–98 is nuclear localization signal (isoform 2); sequence QVEKGGEPLDACYLKALEGFVMVL. PAS domains are found at residues 80 to 150 and 225 to 295; these read GEPL…PNLS and PHPA…LSKG. The interval 228–272 is nuclear export signal (isoform 2); the sequence is ASLEPPLGRGAFLSRHSLDMKFTYCDERIAEVAGYSPDDLIGCSA. Disordered regions lie at residues 352–377 and 416–446; these read EQTE…GNSV and PILD…DLPD. The short motif at 414–418 is the LRRLL element; it reads MAPIL. The segment covering 426 to 437 has biased composition (low complexity); the sequence is TPSTPQATRRPQ. Positions 448–581 are ODD; it reads LTVGLENAHR…SEDKGLELLE (134 aa). An NTAD region spans residues 450-501; the sequence is VGLENAHRLSTAQKNKTVETDLDIAQDPDTLDLEMLAPYISMDDDFQLNSSE. Lys463 participates in a covalent cross-link: Glycyl lysine isopeptide (Lys-Gly) (interchain with G-Cter in ubiquitin). The LAPYISMD signature appears at 485-492; sequence LAPYISMD. Position 487 is a 4-hydroxyproline (Pro487). The interval 500-595 is disordered; sequence SEQLPKVHRR…KRSPRLEPGS (96 aa). Positions 505–521 are enriched in basic residues; it reads KVHRRPPRVARRPRARS. Residue Lys565 forms a Glycyl lysine isopeptide (Lys-Gly) (interchain with G-Cter in ubiquitin) linkage. Residues 572–584 show a composition bias toward basic and acidic residues; it reads SEDKGLELLETKP.

As to quaternary structure, isoform 1 interacts with ARNT. Isoform 2 interacts with HIF1A. Isoform 2 interacts EPAS1. Isoform 2 interacts (via C-terminus domain) with BAD; the interaction reduces the binding between BAD and BAX. Isoform 2 (via C-terminus domain) interacts with BCL2L2 and MCL1. Interacts with VHL. Post-translationally, in normoxia, hydroxylated on Pro-487 in the oxygen-dependent degradation domain (ODD) by PHD. The hydroxylated proline promotes interaction with VHL, initiating rapid ubiquitination and subsequent proteasomal degradation. Ubiquitinated; ubiquitination occurs in a VHL- and oxygen-dependent pathway and subsequently targeted for proteasomal degradation. Isoform 3 is expressed in endothelial cells of vessels and capillaries in alveoli of the neonatal lung (at protein level). Expressed in lung, brain, heart and kidney. Isoform 2 is expressed in heart and lung. Isoform 2 is highly expressed in the epithelial cell layer of the cornea with lower expression in the layers of ganglion cells, inner nuclear cells, and rods and cones of the retina. Isoform 2 is expressed in the cerebellum only in the Purkinje cell layer.

The protein resides in the nucleus. Its subcellular location is the cytoplasm. It is found in the nucleus speckle. The protein localises to the mitochondrion. Functionally, acts as a transcriptional regulator in adaptive response to low oxygen tension. Acts as a regulator of hypoxia-inducible gene expression. Plays a role in the development of the cardiorespiratory system. Acts as a positive regulator of hypoxia-inducible gene expression. Associates to core DNA sequence 5'-TACGTG-3' within the hypoxia response element (HRE) of target gene promoters in a ARNT-dependent manner, and hence also participates in the transcriptional activation of reporter genes driven by HRE. In terms of biological role, attenuates the ability of transcription factor HIF1A, EPAS1 and the HIF1A-ARNT complex to bind to hypoxia-responsive elements (HRE) located within the enhancer/promoter of hypoxia-inducible target genes and hence inhibits HRE-driven transcriptional activation. Functions as an inhibitor of angiogenesis in hypoxic cells of the cornea. May act as a tumor suppressor. May also be involved in apoptosis. Its function is as follows. Attenuates the ability of transcription factor HIF1A, EPAS1 and the HIF1A-ARNT complex to bind to hypoxia-responsive elements (HRE) located within the enhancer/promoter of hypoxia-inducible target genes and hence inhibits HRE-driven transcriptional activation. Also plays a role in the development of the lung and heart during embryonic and neonatal stages. This is Hypoxia-inducible factor 3-alpha from Mus musculus (Mouse).